The primary structure comprises 192 residues: Ion-translocating oxidoreductase complex subunit A (192 aa).

The next 6 membrane-spanning stretches (helical) occupy residues 5-25 (LLLL…FLGL), 39-59 (IGMS…SYLV), 65-85 (LPFD…AVVV), 102-122 (ALGI…VALL), 134-154 (AIYG…FSAM), and 171-191 (AIAM…TGLV).

It belongs to the NqrDE/RnfAE family. The complex is composed of six subunits: RnfA, RnfB, RnfC, RnfD, RnfE and RnfG.

Its subcellular location is the cell inner membrane. In terms of biological role, part of a membrane-bound complex that couples electron transfer with translocation of ions across the membrane. This chain is Ion-translocating oxidoreductase complex subunit A, found in Shewanella putrefaciens (strain CN-32 / ATCC BAA-453).